The chain runs to 245 residues: Phycocyanobilin:ferredoxin oxidoreductase (245 aa).

The protein belongs to the HY2 family.

The catalysed reaction is (2R,3Z)-phycocyanobilin + 4 oxidized [2Fe-2S]-[ferredoxin] = biliverdin IXalpha + 4 reduced [2Fe-2S]-[ferredoxin] + 4 H(+). Its function is as follows. Catalyzes the four-electron reduction of biliverdin IX-alpha (2-electron reduction at both the A and D rings); the reaction proceeds via an isolatable 2-electron intermediate, 181,182-dihydrobiliverdin. This is Phycocyanobilin:ferredoxin oxidoreductase from Trichormus variabilis (strain ATCC 29413 / PCC 7937) (Anabaena variabilis).